A 263-amino-acid chain; its full sequence is HLA class II histocompatibility antigen, DM beta chain (263 aa).

The signal sequence occupies residues 1–18 (MITFLPLLLGLSLGCTGA). A beta-1 region spans residues 19-112 (GGFVAHVEST…PFWGSLTNRT (94 aa)). At 19 to 218 (GGFVAHVEST…PGLSPMQTLK (200 aa)) the chain is on the lumenal side. Cystine bridges form between Cys29–Cys97 and Cys43–Cys53. An N-linked (GlcNAc...) asparagine glycan is attached at Asn110. Positions 113-207 (RPPSVQVAKT…GAPEPILRDW (95 aa)) are beta-2. Residues 114–208 (PPSVQVAKTT…APEPILRDWT (95 aa)) enclose the Ig-like C1-type domain. Cys135 and Cys192 are disulfide-bonded. The tract at residues 208–218 (TPGLSPMQTLK) is connecting peptide. The chain crosses the membrane as a helical span at residues 219–239 (VSVSAVTLGLGLIIFSLGVIS). Topologically, residues 240-263 (WRRAGHSSYTPLPGSNYSEGWHIS) are cytoplasmic. The YXXZ motif signature appears at 248-251 (YTPL).

Belongs to the MHC class II family. In terms of assembly, heterodimer of an alpha chain (DMA) and a beta chain (DMB). Interacts with MHCII; this interaction mediates rapid selection of high-affinity peptides in a pH-dependent manner, with an optimum at pH 5.5.

Its subcellular location is the late endosome membrane. The protein resides in the lysosome membrane. Functionally, plays a critical role in catalyzing the release of class II-associated invariant chain peptide (CLIP) from newly synthesized MHC class II molecules and freeing the peptide binding site for acquisition of antigenic peptides. In B-cells, the interaction between HLA-DM and MHC class II molecules is regulated by HLA-DO. The sequence is that of HLA class II histocompatibility antigen, DM beta chain (HLA-DMB) from Homo sapiens (Human).